Here is a 344-residue protein sequence, read N- to C-terminus: Selenide, water dikinase (344 aa).

The active site involves Sec-16. A non-standard amino acid (selenocysteine) is located at residue Sec-16. Residues Lys-19 and 46–48 contribute to the ATP site; that span reads TND. Asp-49 contributes to the Mg(2+) binding site. Residues Asp-66, Asp-89, and 135–137 contribute to the ATP site; that span reads GHT. Residue Asp-89 participates in Mg(2+) binding. Asp-223 is a Mg(2+) binding site.

It belongs to the selenophosphate synthase 1 family. Class I subfamily. In terms of assembly, homodimer. It depends on Mg(2+) as a cofactor.

It carries out the reaction hydrogenselenide + ATP + H2O = selenophosphate + AMP + phosphate + 2 H(+). Functionally, synthesizes selenophosphate from selenide and ATP. This chain is Selenide, water dikinase, found in Caldanaerobacter subterraneus subsp. tengcongensis (strain DSM 15242 / JCM 11007 / NBRC 100824 / MB4) (Thermoanaerobacter tengcongensis).